The primary structure comprises 115 residues: Ribonuclease P protein component (115 aa).

Belongs to the RnpA family. Consists of a catalytic RNA component (M1 or rnpB) and a protein subunit.

The enzyme catalyses Endonucleolytic cleavage of RNA, removing 5'-extranucleotides from tRNA precursor.. Its function is as follows. RNaseP catalyzes the removal of the 5'-leader sequence from pre-tRNA to produce the mature 5'-terminus. It can also cleave other RNA substrates such as 4.5S RNA. The protein component plays an auxiliary but essential role in vivo by binding to the 5'-leader sequence and broadening the substrate specificity of the ribozyme. The chain is Ribonuclease P protein component from Baumannia cicadellinicola subsp. Homalodisca coagulata.